The chain runs to 443 residues: Thymidine phosphorylase (443 aa).

It belongs to the thymidine/pyrimidine-nucleoside phosphorylase family. In terms of assembly, homodimer.

It carries out the reaction thymidine + phosphate = 2-deoxy-alpha-D-ribose 1-phosphate + thymine. The protein operates within pyrimidine metabolism; dTMP biosynthesis via salvage pathway; dTMP from thymine: step 1/2. The enzymes which catalyze the reversible phosphorolysis of pyrimidine nucleosides are involved in the degradation of these compounds and in their utilization as carbon and energy sources, or in the rescue of pyrimidine bases for nucleotide synthesis. This is Thymidine phosphorylase from Shewanella sp. (strain MR-4).